We begin with the raw amino-acid sequence, 440 residues long: Trigger factor (440 aa).

One can recognise a PPIase FKBP-type domain in the interval 163–248 (NDTVSINFKG…INSIKEKVLP (86 aa)).

The protein belongs to the FKBP-type PPIase family. Tig subfamily.

It is found in the cytoplasm. The catalysed reaction is [protein]-peptidylproline (omega=180) = [protein]-peptidylproline (omega=0). Functionally, involved in protein export. Acts as a chaperone by maintaining the newly synthesized protein in an open conformation. Functions as a peptidyl-prolyl cis-trans isomerase. This chain is Trigger factor, found in Finegoldia magna (strain ATCC 29328 / DSM 20472 / WAL 2508) (Peptostreptococcus magnus).